A 319-amino-acid polypeptide reads, in one-letter code: Lipoyl synthase (319 aa).

A disordered region spans residues 1-24 (MAVVIDTVGARPRHPEKQANPDTP). A compositionally biased stretch (basic and acidic residues) spans 13 to 24 (RHPEKQANPDTP). Positions 58, 63, 69, 84, 88, 91, and 298 each coordinate [4Fe-4S] cluster. The Radical SAM core domain maps to 70–287 (WDKSHATFMI…EEIARAKGFL (218 aa)).

It belongs to the radical SAM superfamily. Lipoyl synthase family. [4Fe-4S] cluster serves as cofactor.

Its subcellular location is the cytoplasm. It catalyses the reaction [[Fe-S] cluster scaffold protein carrying a second [4Fe-4S](2+) cluster] + N(6)-octanoyl-L-lysyl-[protein] + 2 oxidized [2Fe-2S]-[ferredoxin] + 2 S-adenosyl-L-methionine + 4 H(+) = [[Fe-S] cluster scaffold protein] + N(6)-[(R)-dihydrolipoyl]-L-lysyl-[protein] + 4 Fe(3+) + 2 hydrogen sulfide + 2 5'-deoxyadenosine + 2 L-methionine + 2 reduced [2Fe-2S]-[ferredoxin]. The protein operates within protein modification; protein lipoylation via endogenous pathway; protein N(6)-(lipoyl)lysine from octanoyl-[acyl-carrier-protein]: step 2/2. Functionally, catalyzes the radical-mediated insertion of two sulfur atoms into the C-6 and C-8 positions of the octanoyl moiety bound to the lipoyl domains of lipoate-dependent enzymes, thereby converting the octanoylated domains into lipoylated derivatives. This is Lipoyl synthase from Phenylobacterium zucineum (strain HLK1).